The following is a 215-amino-acid chain: Vesicle-trafficking protein SEC22b-B (215 aa).

Residues 1–190 lie on the Cytoplasmic side of the membrane; the sequence is MVLLTMIARL…RSDAKYLNTR (190 aa). The Longin domain maps to 6–119; the sequence is MIARLADGLP…YSFIEFDTYI (114 aa). Residues 134–194 enclose the v-SNARE coiled-coil homology domain; it reads NLSNINTELQ…KYLNTRSTYA (61 aa). Residues 191–213 traverse the membrane as a helical segment; it reads STYAKLAAGGVFFIMLIVYIRFW. At 214–215 the chain is on the lumenal side; the sequence is WL.

The protein belongs to the synaptobrevin family. As to quaternary structure, component of 2 distinct SNARE complexes.

The protein localises to the endoplasmic reticulum membrane. Its subcellular location is the endoplasmic reticulum-Golgi intermediate compartment membrane. It is found in the golgi apparatus. The protein resides in the cis-Golgi network membrane. It localises to the trans-Golgi network membrane. The protein localises to the melanosome. SNARE involved in targeting and fusion of ER-derived transport vesicles with the Golgi complex as well as Golgi-derived retrograde transport vesicles with the ER. This chain is Vesicle-trafficking protein SEC22b-B, found in Danio rerio (Zebrafish).